The following is a 764-amino-acid chain: MEVWEHSRPIADDTIKKTPSFTTLPIRINKQNDVADAATRRALRDWDYYLHDGLAERALISISELGNLGAFAYPEVPPERLAIVTYLTDLGILHDDGYEAMDMDQARTEHREFGALFDPHEQLPSRRGTRAAKLKKLVSQILLEAIRIDRDMGMYMFDMYNKGWLSVAGGEGKVPQFKSVEEYQAYRRDDFGIRAFWPMVEFGMAMRLSDEDKKLIEPVMEPIDKAIIWTNDYWSFDREYHESITNGSRLTNVVEVVRQIENKSIDEAKAAVRQLLVNLEQQYLERKRAIYAQNPSIPSHLRKWIEVVGITVAGTHFWASCSPRHHAWRNNSRNGLKPANHVAAPTLITPSNNLNSSKGSEEQMQDSDNGTRTQMCPANDHEVMQLNAKLSLGKQDGGHAMRAALALLSRAAEQCESLFDGMEHERARLLQSGEEKARLSWEGRSKGSQELEHSWYKPAKTALQAPIHYICSMPSKGVRSRMIEAFNYWLEVDETSLTKIRRLVDLLHNASLILDDIEDHSPKRRGRPATHTIFGHSQAINSANFMFVQAVQVARQFRNPNAVDILLEELENLYLGQSWDLDWKYKLRCPSPSEYLNMVDNKTGGLFRLLLRLMQAERKGTTEVDLDGLTVLFGRFFQIRDDYMNLRSGLYTEQKGFCEDLDEGKFSYPIVVCVANHADFRDLIDGVFRQRPTAITSGMQPLAPEIKRYVVEYLNTSGTFQHCREFLMQLESLIESEIDRIEKVTNEANPMLRLLLEKLSVKEN.

A terpene cyclase region spans residues 2–331; it reads EVWEHSRPIA…SPRHHAWRNN (330 aa). Aspartate 95 contacts Mg(2+). Residues aspartate 95, 187–190, asparagine 231, 235–239, and 324–325 contribute to the substrate site; these read RRDD, SFDRE, and RH. Positions 95-99 match the DDXXD 1 motif; it reads DDGYE. Residues 231 to 239 carry the NSE/DTE motif; sequence NDYWSFDRE. The interval 332 to 759 is prenyltransferase; sequence SRNGLKPANH…PMLRLLLEKL (428 aa). The disordered stretch occupies residues 347–372; it reads LITPSNNLNSSKGSEEQMQDSDNGTR. Positions 348-358 are enriched in polar residues; sequence ITPSNNLNSSK. Lysine 476, arginine 479, and histidine 508 together coordinate isopentenyl diphosphate. Positions 515 and 519 each coordinate Mg(2+). A DDXXD 2 motif is present at residues 515-519; that stretch reads DDIED. Residue arginine 524 participates in dimethylallyl diphosphate binding. Arginine 525 provides a ligand contact to isopentenyl diphosphate. Residues lysine 602, threonine 603, glutamine 638, asparagine 645, lysine 655, and lysine 665 each coordinate dimethylallyl diphosphate.

The protein in the N-terminal section; belongs to the terpene synthase family. It in the C-terminal section; belongs to the FPP/GGPP synthase family. Hexamer. The cofactor is Mg(2+).

It catalyses the reaction isopentenyl diphosphate + (2E,6E)-farnesyl diphosphate = (2E,6E,10E)-geranylgeranyl diphosphate + diphosphate. The enzyme catalyses isopentenyl diphosphate + (2E,6E,10E)-geranylgeranyl diphosphate = (2E,6E,10E,14E)-geranylfarnesyl diphosphate + diphosphate. The catalysed reaction is (2E,6E,10E,14E)-geranylfarnesyl diphosphate + H2O = sesterfisherol + diphosphate. The protein operates within secondary metabolite biosynthesis; terpenoid biosynthesis. In terms of biological role, bifunctional terpene synthase; part of the gene cluster that mediates the biosynthesis of sesterfisheric acid. The bifunctional terpene synthase NfSS converts dimethylallyl diphosphate (DMAPP) and isopentenyl diphosphate (IPP) into sesterfisherol. The C-terminal prenyltransferase (PT) domain of NfSS catalyzes formation of geranylfarnesyl pyrophosphate (GFPP), whereas the N-terminal terpene cyclase (TC) domain catalyzes the cyclization of GFPP to sesterfisherol. The cytochrome P450 monooxygenase NfP450 then catalyzes oxidative modifications of sesterfisherol into sesterfisheric acid. The sequence is that of Sesterfisherol synthase from Neosartorya fischeri (strain ATCC 1020 / DSM 3700 / CBS 544.65 / FGSC A1164 / JCM 1740 / NRRL 181 / WB 181) (Aspergillus fischerianus).